The sequence spans 379 residues: Tryptophan 2,3-dioxygenase (379 aa).

Substrate is bound by residues 57 to 61 (FIITH) and R128. Heme is bound at residue H312. T327 is a substrate binding site.

This sequence belongs to the tryptophan 2,3-dioxygenase family. Homotetramer. Dimer of dimers. Heme is required as a cofactor.

The enzyme catalyses L-tryptophan + O2 = N-formyl-L-kynurenine. It functions in the pathway amino-acid degradation; L-tryptophan degradation via kynurenine pathway; L-kynurenine from L-tryptophan: step 1/2. The protein operates within pigment biosynthesis; ommochrome biosynthesis. Its function is as follows. Heme-dependent dioxygenase that catalyzes the oxidative cleavage of the L-tryptophan (L-Trp) pyrrole ring and converts L-tryptophan to N-formyl-L-kynurenine. Catalyzes the oxidative cleavage of the indole moiety. The sequence is that of Tryptophan 2,3-dioxygenase from Drosophila erecta (Fruit fly).